The sequence spans 636 residues: 1-deoxy-D-xylulose-5-phosphate synthase (636 aa).

Thiamine diphosphate-binding positions include histidine 74 and 115–117 (AHS). Aspartate 146 provides a ligand contact to Mg(2+). Thiamine diphosphate is bound by residues 147–148 (GS), asparagine 176, tyrosine 287, and glutamate 369. Asparagine 176 serves as a coordination point for Mg(2+).

Belongs to the transketolase family. DXPS subfamily. As to quaternary structure, homodimer. The cofactor is Mg(2+). Thiamine diphosphate is required as a cofactor.

It catalyses the reaction D-glyceraldehyde 3-phosphate + pyruvate + H(+) = 1-deoxy-D-xylulose 5-phosphate + CO2. The protein operates within metabolic intermediate biosynthesis; 1-deoxy-D-xylulose 5-phosphate biosynthesis; 1-deoxy-D-xylulose 5-phosphate from D-glyceraldehyde 3-phosphate and pyruvate: step 1/1. Its function is as follows. Catalyzes the acyloin condensation reaction between C atoms 2 and 3 of pyruvate and glyceraldehyde 3-phosphate to yield 1-deoxy-D-xylulose-5-phosphate (DXP). This is 1-deoxy-D-xylulose-5-phosphate synthase from Polaromonas naphthalenivorans (strain CJ2).